We begin with the raw amino-acid sequence, 401 residues long: Phosphoglycerate kinase (401 aa).

Residues 21–23 (DLN), arginine 37, 60–63 (HLGR), arginine 119, and arginine 152 each bind substrate. Residues lysine 203, glutamate 325, and 351–354 (GGDT) contribute to the ATP site.

The protein belongs to the phosphoglycerate kinase family. As to quaternary structure, monomer.

The protein localises to the cytoplasm. The catalysed reaction is (2R)-3-phosphoglycerate + ATP = (2R)-3-phospho-glyceroyl phosphate + ADP. It participates in carbohydrate degradation; glycolysis; pyruvate from D-glyceraldehyde 3-phosphate: step 2/5. The protein is Phosphoglycerate kinase of Acidithiobacillus ferrooxidans (strain ATCC 23270 / DSM 14882 / CIP 104768 / NCIMB 8455) (Ferrobacillus ferrooxidans (strain ATCC 23270)).